A 54-amino-acid chain; its full sequence is U7-myrmicitoxin-Tb1a (54 aa).

An N-terminal signal peptide occupies residues 1–26; that stretch reads MQLSHLLLAFAMIFVMTIIHTPQVQA. Residues 27-36 constitute a propeptide that is removed on maturation; sequence DAMADADADA. Cysteine 40 and cysteine 49 are joined by a disulfide.

As to expression, expressed by the venom gland.

Its subcellular location is the secreted. Functionally, venom protein with unknown function. Does not induce paralysis when a high dose is administered by intrathoracic injection into the blowfly Lucilia caesar. This Tetramorium bicarinatum (Tramp ant) protein is U7-myrmicitoxin-Tb1a.